Reading from the N-terminus, the 353-residue chain is Protein-glutamate methylesterase/protein-glutamine glutaminase (353 aa).

The region spanning 6–123 is the Response regulatory domain; sequence RVLVIDDSAL…ARGLKAMLSE (118 aa). At aspartate 57 the chain carries 4-aspartylphosphate. One can recognise a CheB-type methylesterase domain in the interval 159 to 351; sequence AESTDKVIAI…PRIVDLLSER (193 aa). Active-site residues include serine 171, histidine 197, and aspartate 293.

The protein belongs to the CheB family. Post-translationally, phosphorylated by CheA. Phosphorylation of the N-terminal regulatory domain activates the methylesterase activity.

The protein localises to the cytoplasm. It catalyses the reaction [protein]-L-glutamate 5-O-methyl ester + H2O = L-glutamyl-[protein] + methanol + H(+). The enzyme catalyses L-glutaminyl-[protein] + H2O = L-glutamyl-[protein] + NH4(+). Its function is as follows. Involved in chemotaxis. Part of a chemotaxis signal transduction system that modulates chemotaxis in response to various stimuli. Catalyzes the demethylation of specific methylglutamate residues introduced into the chemoreceptors (methyl-accepting chemotaxis proteins or MCP) by CheR. Also mediates the irreversible deamidation of specific glutamine residues to glutamic acid. The protein is Protein-glutamate methylesterase/protein-glutamine glutaminase of Syntrophotalea carbinolica (strain DSM 2380 / NBRC 103641 / GraBd1) (Pelobacter carbinolicus).